The primary structure comprises 425 residues: MDNSFDILDIKAREVIDSRGNPTVEVEVLTAGGYGSAIVPSGASTGTHEAVELRDKSQRFGGKGVLVAVDNVNSIIAPELIGFDSRTQREIDTYMIELDRTANKGKLGANAILAVSMAVAKAAASTASLPLYKYIGGCNSYIMPVPMMNVINGGEHAGNALEFQEFMIMPVGADSISEAIRMCAETYHTLKKVIVSKYGKNASNVGDEGGFAPPVSDIRETLDLLTDAVKMAGYEDEITFALDCAASEFYNKDDNKYIVKGAPLSSDQLISLYKEICDEYPVISIEDPLDEEDFEGFASLTKELKGVQIVGDDLFVTNTERLKKGIEMGAGNALLLKVNQIGTLSESIDAANLAFRNGYGVVVSHRSGESEDNTIADISVALNAGQIKTGAPARGERTAKYNQLIRIEEEIGYPKYAGKNIRCPF.

Gln164 provides a ligand contact to (2R)-2-phosphoglycerate. Glu208 functions as the Proton donor in the catalytic mechanism. Mg(2+) contacts are provided by Asp243, Glu286, and Asp312. Lys337, Arg366, Ser367, and Lys388 together coordinate (2R)-2-phosphoglycerate. The Proton acceptor role is filled by Lys337.

This sequence belongs to the enolase family. Requires Mg(2+) as cofactor.

The protein resides in the cytoplasm. The protein localises to the secreted. It is found in the cell surface. It catalyses the reaction (2R)-2-phosphoglycerate = phosphoenolpyruvate + H2O. Its pathway is carbohydrate degradation; glycolysis; pyruvate from D-glyceraldehyde 3-phosphate: step 4/5. Its function is as follows. Catalyzes the reversible conversion of 2-phosphoglycerate (2-PG) into phosphoenolpyruvate (PEP). It is essential for the degradation of carbohydrates via glycolysis. The sequence is that of Enolase from Methanococcus aeolicus (strain ATCC BAA-1280 / DSM 17508 / OCM 812 / Nankai-3).